The following is a 394-amino-acid chain: LL-diaminopimelate aminotransferase (394 aa).

Residues Tyr14 and Gly41 each coordinate substrate. Pyridoxal 5'-phosphate-binding positions include Tyr71, 104 to 105, Tyr128, Asn174, Tyr205, and 233 to 235; these read AK and SFS. Substrate contacts are provided by Lys105, Tyr128, and Asn174. Position 236 is an N6-(pyridoxal phosphate)lysine (Lys236). Residues Arg244 and Asn275 each coordinate pyridoxal 5'-phosphate. Asn275 and Arg369 together coordinate substrate.

Belongs to the class-I pyridoxal-phosphate-dependent aminotransferase family. LL-diaminopimelate aminotransferase subfamily. As to quaternary structure, homodimer. The cofactor is pyridoxal 5'-phosphate.

The catalysed reaction is (2S,6S)-2,6-diaminopimelate + 2-oxoglutarate = (S)-2,3,4,5-tetrahydrodipicolinate + L-glutamate + H2O + H(+). It functions in the pathway amino-acid biosynthesis; L-lysine biosynthesis via DAP pathway; LL-2,6-diaminopimelate from (S)-tetrahydrodipicolinate (aminotransferase route): step 1/1. Functionally, involved in the synthesis of meso-diaminopimelate (m-DAP or DL-DAP), required for both lysine and peptidoglycan biosynthesis. Catalyzes the direct conversion of tetrahydrodipicolinate to LL-diaminopimelate. The protein is LL-diaminopimelate aminotransferase of Chlamydia trachomatis serovar L2b (strain UCH-1/proctitis).